We begin with the raw amino-acid sequence, 189 residues long: UPF0301 protein CTLon_0458 (189 aa).

Belongs to the UPF0301 (AlgH) family.

This Chlamydia trachomatis serovar L2b (strain UCH-1/proctitis) protein is UPF0301 protein CTLon_0458.